The following is a 708-amino-acid chain: G-box-binding factor (708 aa).

Disordered stretches follow at residues 1 to 29 (MLSTHHHQGNSSSSSSSSSPSQTIGGSDL) and 123 to 339 (QQAQ…QTIP). 3 stretches are compositionally biased toward low complexity: residues 11–21 (SSSSSSSSSPS), 123–219 (QQAQ…QHHQ), and 227–316 (SQPQ…SPST). Over residues 324-333 (ETSNSEKKDS) the composition is skewed to basic and acidic residues. 2 consecutive repeat copies span residues 339-368 (PKCTRCNEAASWKHDKRRWWCKECKKAFTP) and 481-510 (PPCPLCRGISSWKHDKKRYFCKECKKPFTP). The segment at 511 to 604 (VGAGLSPSSS…PTYSPNPSLP (94 aa)) is disordered. The span at 516 to 590 (SPSSSPSSPK…SSISQSPLQL (75 aa)) shows a compositional bias: low complexity. Over residues 591-600 (NYQTPTYSPN) the composition is skewed to polar residues.

Its subcellular location is the nucleus. Functionally, cAMP-responsive transcriptional activator regulating late gene expression. Essential component of the developmental switch between early and late development. Binds to a number of CA/GT-rich gene regulatory elements. The chain is G-box-binding factor (gbfA) from Dictyostelium discoideum (Social amoeba).